A 418-amino-acid chain; its full sequence is Serine hydroxymethyltransferase (418 aa).

Residues Leu121 and 125–127 contribute to the (6S)-5,6,7,8-tetrahydrofolate site; that span reads GHL. An N6-(pyridoxal phosphate)lysine modification is found at Lys230. Residues Glu246 and 355–357 contribute to the (6S)-5,6,7,8-tetrahydrofolate site; that span reads SPF.

The protein belongs to the SHMT family. In terms of assembly, homodimer. Pyridoxal 5'-phosphate serves as cofactor.

The protein localises to the cytoplasm. The catalysed reaction is (6R)-5,10-methylene-5,6,7,8-tetrahydrofolate + glycine + H2O = (6S)-5,6,7,8-tetrahydrofolate + L-serine. It functions in the pathway one-carbon metabolism; tetrahydrofolate interconversion. Its pathway is amino-acid biosynthesis; glycine biosynthesis; glycine from L-serine: step 1/1. Its function is as follows. Catalyzes the reversible interconversion of serine and glycine with tetrahydrofolate (THF) serving as the one-carbon carrier. This reaction serves as the major source of one-carbon groups required for the biosynthesis of purines, thymidylate, methionine, and other important biomolecules. Also exhibits THF-independent aldolase activity toward beta-hydroxyamino acids, producing glycine and aldehydes, via a retro-aldol mechanism. In Streptococcus pneumoniae serotype 2 (strain D39 / NCTC 7466), this protein is Serine hydroxymethyltransferase.